The chain runs to 488 residues: Phenylalanine--tRNA ligase alpha subunit (488 aa).

L-phenylalanine contacts are provided by residues Thr-315, 354–356 (QLD), Phe-394, and Phe-419.

The protein belongs to the class-II aminoacyl-tRNA synthetase family. Phe-tRNA synthetase alpha subunit type 2 subfamily. Tetramer of two alpha and two beta subunits. Mg(2+) is required as a cofactor.

Its subcellular location is the cytoplasm. It carries out the reaction tRNA(Phe) + L-phenylalanine + ATP = L-phenylalanyl-tRNA(Phe) + AMP + diphosphate + H(+). In Pyrobaculum calidifontis (strain DSM 21063 / JCM 11548 / VA1), this protein is Phenylalanine--tRNA ligase alpha subunit.